The chain runs to 223 residues: Putative UPF0607 protein LOC392364 (223 aa).

Over residues Lys110 to Arg138 the composition is skewed to basic and acidic residues. The disordered stretch occupies residues Lys110 to Gly223. Polar residues-rich tracts occupy residues Glu145–Arg163 and Gln174–Lys186.

The protein belongs to the UPF0607 family.

This is Putative UPF0607 protein LOC392364 from Homo sapiens (Human).